The chain runs to 208 residues: Dephospho-CoA kinase (208 aa).

Positions 3–208 (EIGLTGGIGS…ALSAAGVTQA (206 aa)) constitute a DPCK domain. 11 to 16 (GSGKTR) provides a ligand contact to ATP.

The protein belongs to the CoaE family.

Its subcellular location is the cytoplasm. It carries out the reaction 3'-dephospho-CoA + ATP = ADP + CoA + H(+). The protein operates within cofactor biosynthesis; coenzyme A biosynthesis; CoA from (R)-pantothenate: step 5/5. In terms of biological role, catalyzes the phosphorylation of the 3'-hydroxyl group of dephosphocoenzyme A to form coenzyme A. This chain is Dephospho-CoA kinase, found in Cupriavidus pinatubonensis (strain JMP 134 / LMG 1197) (Cupriavidus necator (strain JMP 134)).